We begin with the raw amino-acid sequence, 624 residues long: Leucine-rich repeat, immunoglobulin-like domain and transmembrane domain-containing protein 1 (624 aa).

Positions 1–21 are cleaved as a signal peptide; it reads MWVALGMLWLLALGGPHQAWG. Residues 22-59 enclose the LRRNT domain; that stretch reads FCPSECSCSLRILSDGSKARTVVCSDPDLTLPPASIPP. Residues 22-527 are Lumenal-facing; the sequence is FCPSECSCSL…EVVDAEGTQR (506 aa). LRR repeat units follow at residues 60-81, 84-105, 108-129, 132-153, and 156-177; these read DTCK…TFRP, RLEQ…MLRG, RLRE…ALRD, QLQL…AAHF, and NLTF…LLDV. N156 carries an N-linked (GlcNAc...) asparagine glycan. An LRRCT domain is found at 201–254; sequence NPWVCDCRLYDLVHLLDGWVSSNLIFIEARLRCASPRSLAGVAFSQLELRKCQS. The 70-residue stretch at 267 to 336 folds into the Ig-like C2-type domain; sequence PLGSTVLLRC…YICQAKNFLG (70 aa). An intrachain disulfide couples C276 to C329. N-linked (GlcNAc...) asparagine glycans are attached at residues N297 and N456. Positions 431-519 constitute a Fibronectin type-III domain; it reads MVRSLKVVGD…QCVIFSTDEV (89 aa). One copy of the LRR 6 repeat lies at 526 to 549; sequence QRLINMVVISVAAIIALPPTLLVC. Residues 528-548 form a helical membrane-spanning segment; the sequence is LINMVVISVAAIIALPPTLLV. Over 549 to 624 the chain is Cytoplasmic; sequence CCGALRRRCH…GGRRINEYFC (76 aa).

In terms of assembly, may form a homodimer. Interacts with LRIT2; may form a heterodimer with LRIT2. Interacts (via its N-terminal extracellular domain) with metabotropic glutamate receptor GRM6. Interacts (via its extreme C-terminus) with the scaffold protein FRMPD2 (via the third PDZ domain); the interaction leads to their colocalization in photoreceptor synapses. Expressed predominantly in developing photoreceptor and bipolar cells.

It is found in the endoplasmic reticulum membrane. The protein resides in the cell projection. Its subcellular location is the dendrite. Photoreceptor synaptic protein essential for normal vision. Involved in synapse formation in cone photoreceptor cells. The sequence is that of Leucine-rich repeat, immunoglobulin-like domain and transmembrane domain-containing protein 1 (Lrit1) from Mus musculus (Mouse).